A 141-amino-acid chain; its full sequence is Early nodulin-like protein 19 (141 aa).

An N-terminal signal peptide occupies residues 1 to 26 (MGRSMVLISAVVLAFLVAAPIPEVTA). The Phytocyanin domain occupies 27–127 (KKYLVGDKKF…GMKLDVLVET (101 aa)). N42 and N88 each carry an N-linked (GlcNAc...) asparagine glycan. C80 and C115 are joined by a disulfide.

This sequence belongs to the early nodulin-like (ENODL) family.

Its function is as follows. May act as a carbohydrate transporter. The sequence is that of Early nodulin-like protein 19 from Arabidopsis thaliana (Mouse-ear cress).